The primary structure comprises 532 residues: MADRPIRQALLSVSDKTGIVEFAQGLVKRGVKLLSTGGTAKLLAQNALPVIEVSDYTGFPEMMDGRVKTLHPKVHGGILGRRGTDDAIMQQHGIEGIDMVVVNLYPFAATVAKPDCTLADAVENIDIGGPTMVRSAAKNHKDVAIVVNNHDFNAILAEMDQHQNSLTFETRFDLAIKAFEHTAQYDSMIANYFGQLVKPYHIAEEEEANAKCGQFPRTLNLNFVRKQAMRYGENSHQNAAFYVDLNVKEASVATANQLQGKALSYNNIADTDAALECVKEFDDPACVIVKHANPCGVALGKDILDAYNRAYQTDPTSAFGGIIAFNRELDEKTANEIVERQFVEVIIAPKVSAEAQEVMKRKKNVRLLECGEWTSRSERLDFKRVNGGLLVQDADLGMVGVDDLKVVSKRQPTEQELKDLLFCWKVAKFVKSNAIVYAKDNQTIGIGAGQMSRVYSAKIAGIKAQDEGLEVAGCVMASDAFFPFRDGIDAAAKVGIQCVIHPGGSMRDQEVIDAADEHNMVMVLTGMRHFRH.

The MGS-like domain occupies 1-147; the sequence is MADRPIRQAL…KNHKDVAIVV (147 aa).

The protein belongs to the PurH family.

It carries out the reaction (6R)-10-formyltetrahydrofolate + 5-amino-1-(5-phospho-beta-D-ribosyl)imidazole-4-carboxamide = 5-formamido-1-(5-phospho-D-ribosyl)imidazole-4-carboxamide + (6S)-5,6,7,8-tetrahydrofolate. The enzyme catalyses IMP + H2O = 5-formamido-1-(5-phospho-D-ribosyl)imidazole-4-carboxamide. It functions in the pathway purine metabolism; IMP biosynthesis via de novo pathway; 5-formamido-1-(5-phospho-D-ribosyl)imidazole-4-carboxamide from 5-amino-1-(5-phospho-D-ribosyl)imidazole-4-carboxamide (10-formyl THF route): step 1/1. Its pathway is purine metabolism; IMP biosynthesis via de novo pathway; IMP from 5-formamido-1-(5-phospho-D-ribosyl)imidazole-4-carboxamide: step 1/1. This chain is Bifunctional purine biosynthesis protein PurH, found in Haemophilus influenzae (strain ATCC 51907 / DSM 11121 / KW20 / Rd).